The sequence spans 302 residues: Stanniocalcin-2 (302 aa).

The N-terminal stretch at 1–24 is a signal peptide; the sequence is MCAERLGHFMTLALVLATIDPARG. The segment at 23 to 44 is disordered; sequence RGTDATNPPEGPQDRSSQQKGR. Residue asparagine 73 is glycosylated (N-linked (GlcNAc...) asparagine). The disordered stretch occupies residues 218-302; it reads PPTAPPERQP…EQSEYSDIRR (85 aa). Residues 227 to 264 are compositionally biased toward basic and acidic residues; the sequence is PQVDRAKLSRAHHGEAGHHLPEPSSRETGRGAKGERGS. 2 positions are modified to phosphoserine: serine 250 and serine 251. A Phosphothreonine modification is found at threonine 254.

This sequence belongs to the stanniocalcin family. As to quaternary structure, homodimer; disulfide-linked.

The protein resides in the secreted. Functionally, has an anti-hypocalcemic action on calcium and phosphate homeostasis. The polypeptide is Stanniocalcin-2 (STC2) (Macaca nemestrina (Pig-tailed macaque)).